Consider the following 144-residue polypeptide: MALERTFSIVKPDAVKRNLVGEIYHRIEKAGLQIIAAKMVSLTEAQASGFYAEHEGKEFFGPLKEFMTSGPIMVQVLEGENAIARYRELMGKTNPEEAACGTIRADYAISMRYNSVHGSDSPESAAREIEFFFPESEICPRPAE.

The ATP site is built by Lys-11, Phe-59, Arg-87, Thr-93, Arg-104, and Asn-114. Catalysis depends on His-117, which acts as the Pros-phosphohistidine intermediate.

It belongs to the NDK family. As to quaternary structure, homotetramer. The cofactor is Mg(2+).

It localises to the cytoplasm. It carries out the reaction a 2'-deoxyribonucleoside 5'-diphosphate + ATP = a 2'-deoxyribonucleoside 5'-triphosphate + ADP. The enzyme catalyses a ribonucleoside 5'-diphosphate + ATP = a ribonucleoside 5'-triphosphate + ADP. Major role in the synthesis of nucleoside triphosphates other than ATP. The ATP gamma phosphate is transferred to the NDP beta phosphate via a ping-pong mechanism, using a phosphorylated active-site intermediate. The protein is Nucleoside diphosphate kinase of Vibrio atlanticus (strain LGP32) (Vibrio splendidus (strain Mel32)).